A 532-amino-acid chain; its full sequence is Developmental and secondary metabolism regulator ve1 (532 aa).

The 195-residue stretch at 26–220 (NRSLWYQLTV…ADQGCRVRIR (195 aa)) folds into the Velvet domain. The Nuclear localization signal signature appears at 40–45 (ERARAC). Over residues 217–229 (VRIRRDVRMRKRD) the composition is skewed to basic residues. Disordered regions lie at residues 217-440 (VRIR…TEPS) and 458-520 (PQVD…RADG). The span at 233–250 (GGNNNNNNNAGNNAGNNG) shows a compositional bias: low complexity. Basic and acidic residues-rich tracts occupy residues 251-260 (FERREEDFGR) and 283-294 (SEHRASYSDVSR). Residues 302–317 (YPPPPPPPPSYDPTPS) show a composition bias toward pro residues. Residues 397 to 411 (STSTYVPPSPSVYST) show a composition bias toward low complexity. The interval 435–463 (MNTEPSRGSIKISALVEPMPVIEPQVDPL) is PEST. The span at 481–493 (FAQNTRPLFNGQR) shows a compositional bias: polar residues.

Belongs to the velvet family. VeA subfamily. As to quaternary structure, component of the heterotrimeric velvet complex composed of laeA, ve1 and velB; Ve1 acting as a bridging protein between laeA and velB. Interacts directly with laeA and velB.

The protein localises to the nucleus. It localises to the cytoplasm. In terms of biological role, component of the velvet transcription factor complex that controls sexual/asexual developmental ratio in response to light, promoting sexual development in the darkness while stimulating asexual sporulation under illumination. The velvet complex hat acts as a global regulator for secondary metabolite gene expression. Controls the expression of the aurofusarin and trichothecene gene clusters. Also controls the expression of the deoxynivalenol (DON) gene cluster. Regulates hyphal growth and pigment formation. Acts as a positive regulator of virulence. The polypeptide is Developmental and secondary metabolism regulator ve1 (Gibberella zeae (strain ATCC MYA-4620 / CBS 123657 / FGSC 9075 / NRRL 31084 / PH-1) (Wheat head blight fungus)).